The sequence spans 87 residues: U3-theraphotoxin-Hhn1o (87 aa).

Residues 1–24 form the signal peptide; it reads MVNMKASMFLTFAGLVLLFVVCYA. Positions 25–52 are excised as a propeptide; the sequence is SESEEKEFPKEMLSSIFAVDNDFKQEER. Disulfide bonds link C54–C67 and C61–C72.

This sequence belongs to the neurotoxin 10 (Hwtx-1) family. 51 (Hntx-8) subfamily. Hntx-8 sub-subfamily. As to expression, expressed by the venom gland.

The protein localises to the secreted. Functionally, ion channel inhibitor. This Cyriopagopus hainanus (Chinese bird spider) protein is U3-theraphotoxin-Hhn1o.